The sequence spans 316 residues: Transaldolase (316 aa).

The Schiff-base intermediate with substrate role is filled by K132.

Belongs to the transaldolase family. Type 1 subfamily.

The protein localises to the cytoplasm. It carries out the reaction D-sedoheptulose 7-phosphate + D-glyceraldehyde 3-phosphate = D-erythrose 4-phosphate + beta-D-fructose 6-phosphate. It participates in carbohydrate degradation; pentose phosphate pathway; D-glyceraldehyde 3-phosphate and beta-D-fructose 6-phosphate from D-ribose 5-phosphate and D-xylulose 5-phosphate (non-oxidative stage): step 2/3. Functionally, transaldolase is important for the balance of metabolites in the pentose-phosphate pathway. The polypeptide is Transaldolase (Methylomonas aminofaciens).